A 116-amino-acid polypeptide reads, in one-letter code: MSSGLDPAIAARLKRTPDGLVAAVAQQRGTGEVLMMAWMDDEALHRTLTTRKGTYYSRSRQQYWVKGETSGHTQHVHEVRLDCDGDTVLLVVDQVDGACHTGDRTCFDADVLLAES.

Residue aspartate 82 coordinates Mg(2+). Cysteine 83 provides a ligand contact to Zn(2+). Mg(2+) is bound by residues aspartate 84 and aspartate 86. Zn(2+)-binding residues include cysteine 99 and cysteine 106.

The protein belongs to the PRA-CH family. In terms of assembly, homodimer. Mg(2+) serves as cofactor. It depends on Zn(2+) as a cofactor.

Its subcellular location is the cytoplasm. The catalysed reaction is 1-(5-phospho-beta-D-ribosyl)-5'-AMP + H2O = 1-(5-phospho-beta-D-ribosyl)-5-[(5-phospho-beta-D-ribosylamino)methylideneamino]imidazole-4-carboxamide. The protein operates within amino-acid biosynthesis; L-histidine biosynthesis; L-histidine from 5-phospho-alpha-D-ribose 1-diphosphate: step 3/9. Catalyzes the hydrolysis of the adenine ring of phosphoribosyl-AMP. In Saccharopolyspora erythraea (strain ATCC 11635 / DSM 40517 / JCM 4748 / NBRC 13426 / NCIMB 8594 / NRRL 2338), this protein is Phosphoribosyl-AMP cyclohydrolase.